Here is a 537-residue protein sequence, read N- to C-terminus: MSLASVAARRASSLRASTLVRTTFNRAIASASAGDALETVVGVEIHVRLQTRSKLFSGSASAYGGEPNSRVAPFDASLPGTLPVLNAGAVALAVKLGIALEGEVQLRSAFDRKHYWYADLPHGYQITQKRSPIVLGGVVRCQGNLSGDDAGDERSTDGALKVGIERVQLEMDTGKSSVAEDGRGTLVDLNRAGQALVEIVSEPDMRSGEEAVACVEALQRMLRYLHVSDANMEEGSLRCDVNVSVRTSEERARGVFGERVEIKNLNSLRSIARAVKYEAQRHAKVLAGGGKIERETRSFDVNTGKTVVLRTKENLLDYKFTPEPDLPSLVLTSADVEAIAGRMPELPNAAYERLVSGGASPSASNTIVAFPSTLKYFDVAMENCGAAKSADVANFIANEIIGAARKDAGATHKEPLSTLPRAASARRVGELLGKVADGTLSGRMAKQVLEALMNSDERALGDIVDDICGGGQISSDDHLRDICHSVVRDKPEEVRLLQGGKSKLMGALVGEVMKRTSGRANPKDVSKLLADIVAGEP.

The protein belongs to the GatB/GatE family. GatB subfamily. In terms of assembly, subunit of the heterotrimeric GatCAB amidotransferase (AdT) complex, composed of A, B and C subunits.

The protein localises to the mitochondrion. Its subcellular location is the plastid. The protein resides in the chloroplast. The enzyme catalyses L-glutamyl-tRNA(Gln) + L-glutamine + ATP + H2O = L-glutaminyl-tRNA(Gln) + L-glutamate + ADP + phosphate + H(+). Its function is as follows. Allows the formation of correctly charged Gln-tRNA(Gln) through the transamidation of misacylated Glu-tRNA(Gln) in chloroplasts and mitochondria. The reaction takes place in the presence of glutamine and ATP through an activated gamma-phospho-Glu-tRNA(Gln). This is Glutamyl-tRNA(Gln) amidotransferase subunit B, chloroplastic/mitochondrial from Ostreococcus tauri.